The primary structure comprises 313 residues: tRNA pseudouridine synthase B (313 aa).

Aspartate 42 (nucleophile) is an active-site residue.

The protein belongs to the pseudouridine synthase TruB family. Type 1 subfamily.

It carries out the reaction uridine(55) in tRNA = pseudouridine(55) in tRNA. Responsible for synthesis of pseudouridine from uracil-55 in the psi GC loop of transfer RNAs. The protein is tRNA pseudouridine synthase B of Prochlorococcus marinus (strain SARG / CCMP1375 / SS120).